We begin with the raw amino-acid sequence, 317 residues long: MNATNTDVFAQVGGLEARGAKMKKRGTRFLIAALAVLAIAGIGAVTGWAISPSATPGSIDVPQVLASTFSDQVPGSEGGGLGGGLPFTSAVGAFTDFMAGPAIFTLGILGIVVAGAVLVFGGEFSGFVRSVCMMVIAVSMIFVSSNLVKGILGGDHDAGPAEPSPRARFMAAVEAKDFARVQELIEARGAKSAADYVLAQLAVAEGLDRKPGARVVVGKAAGSMAMPPAALGFTPRGEAAYAIERSAYGEPRSSIAKQYQQEWNRKAATWWAMAGVAGIIGAILAAAATGFVGLAVSIRNRVKRVRDLLVMEPGAEP.

Belongs to the kla operon, which is associated with cryptic tellurite resistance, and IncW plasmid fertility inhibition. The sequence is that of Protein KlaC (klaC) from Escherichia coli.